Reading from the N-terminus, the 178-residue chain is Interleukin-10 (178 aa).

Residues 1 to 18 form the signal peptide; it reads MHSSALLCFLVFLAGVGA. An N-linked (GlcNAc...) asparagine glycan is attached at asparagine 29. 2 cysteine pairs are disulfide-bonded: cysteine 30–cysteine 126 and cysteine 80–cysteine 132. A glycan (N-linked (GlcNAc...) asparagine) is linked at asparagine 134.

This sequence belongs to the IL-10 family. As to quaternary structure, homodimer. Interacts with IL10RA and IL10RB.

Its subcellular location is the secreted. In terms of biological role, major immune regulatory cytokine that acts on many cells of the immune system where it has profound anti-inflammatory functions, limiting excessive tissue disruption caused by inflammation. Mechanistically, IL10 binds to its heterotetrameric receptor comprising IL10RA and IL10RB leading to JAK1 and STAT2-mediated phosphorylation of STAT3. In turn, STAT3 translocates to the nucleus where it drives expression of anti-inflammatory mediators. Targets antigen-presenting cells (APCs) such as macrophages and monocytes and inhibits their release of pro-inflammatory cytokines including granulocyte-macrophage colony-stimulating factor /GM-CSF, granulocyte colony-stimulating factor/G-CSF, IL-1 alpha, IL-1 beta, IL-6, IL-8 and TNF-alpha. Also interferes with antigen presentation by reducing the expression of MHC-class II and co-stimulatory molecules, thereby inhibiting their ability to induce T cell activation. In addition, controls the inflammatory response of macrophages by reprogramming essential metabolic pathways including mTOR signaling. This chain is Interleukin-10 (IL10), found in Felis catus (Cat).